We begin with the raw amino-acid sequence, 802 residues long: MSFNHQDIEKKWQGYWEENKTFRTPDETEKPKFYALDMFPYPSGAGLHVGHPEGYTATDILSRMKRMQGYKVLHPMGWDAFGLPAEQYALDTGNSPAEFTEHNINTFRNQIKSLGFSYDWDREVNTTDPNYYKWTQWIFLKLFEKGLAYVDEVPVNWCPALGTVLANEEIIDGKSERGGHPVERRPMRQWMLKITAYGDRLLEDLDELDWPESLKDMQRNWIGRSEGAEVHFNIDGTDEKFTVFTTRPDTLFGATYCVLAPEHALVAEITTAEQKEAVEAYINAVKMKSDLERTELAKEKTGVFTGAYAVNPVNGEKLPIWIADYVLATYGTGAVMAVPAHDERDYEFASVFNLPMKEVVKGGDITKEVYTGDGAHVNSAFLDGLNKEEAIAKMIEWLEVTSAGNQKVTYRLRDWLFSRQRYWGEPIPVIHWEDGTMTAVKEEELPLVLPKTENIRPSGTGESPLANIDEWVNVVDPETGKKGRRETNTMPQWAGSCWYYLRYIDPNNSEALVDPEKVKQWLPVDIYIGGAEHAVLHLLYARFWHKVLYDIGVVPTKEPFQQLFNQGMILGENNEKMSKSKGNVVNPDDIVASHGADTLRLYEMFMGPLDASIAWSENGLDGARRFLDRVWRLFVQDNGELSEKITDAPNKELEKAYHQTVKKVTEDYAELRFNTAISQMMVFINDAYKAETLPKEYVEGFVKMIAPVAPHIGEELWSKLGYNETITYASWPIFDESKLVEDEVEIVVQVMGKVRAKLTMSKDASKEEMEQLALEAIQDQIEGKTVRKVIVVPGKLVNVVAN.

Residues 40–51 (PYPSGAGLHVGH) carry the 'HIGH' region motif. Residues 576–580 (KMSKS) carry the 'KMSKS' region motif. Lys-579 is an ATP binding site.

The protein belongs to the class-I aminoacyl-tRNA synthetase family.

The protein localises to the cytoplasm. The catalysed reaction is tRNA(Leu) + L-leucine + ATP = L-leucyl-tRNA(Leu) + AMP + diphosphate. This Bacillus cereus (strain G9842) protein is Leucine--tRNA ligase.